Here is a 139-residue protein sequence, read N- to C-terminus: Endocuticle structural glycoprotein SgAbd-8 (139 aa).

Glutamine 1 is modified (pyrrolidone carboxylic acid). Threonine 14 carries an O-linked (HexNAc...) threonine glycan. An O-linked (HexNAc...) serine glycan is attached at serine 15. In terms of domain architecture, Chitin-binding type R&amp;R spans 29-99 (DGSYAWSYET…PEGAHLPTPP (71 aa)). A glycan (O-linked (HexNAc...) threonine) is linked at threonine 97. The interval 111–139 (FIASQPQQPGNNGGGQFPRPQPFPRPGAF) is disordered. The segment covering 129–139 (RPQPFPRPGAF) has biased composition (pro residues).

Functionally, component of the abdominal endocuticle. This is Endocuticle structural glycoprotein SgAbd-8 from Schistocerca gregaria (Desert locust).